A 159-amino-acid chain; its full sequence is MRRAVCPGSFDPITNGHLDIIGRASKLYDVVHVAVMINQSKKGLFTVDERIELIREVTADFGNVEVESFHGLLVDFCKQREIPAIVKGLRAVSDFDYELQMAQMNNGLSGVETLFVPTNPTYSFLSSSLVKEVATWGGDVSHLLPPTVHEALVKRLGER.

Position 9 (serine 9) interacts with substrate. Residues 9 to 10 (SF) and histidine 17 each bind ATP. Substrate-binding residues include lysine 41, leucine 73, and lysine 87. Residues 88–90 (GLR), glutamate 98, and 122–128 (YSFLSSS) contribute to the ATP site.

Belongs to the bacterial CoaD family. In terms of assembly, homohexamer. The cofactor is Mg(2+).

It is found in the cytoplasm. It catalyses the reaction (R)-4'-phosphopantetheine + ATP + H(+) = 3'-dephospho-CoA + diphosphate. Its pathway is cofactor biosynthesis; coenzyme A biosynthesis; CoA from (R)-pantothenate: step 4/5. Its function is as follows. Reversibly transfers an adenylyl group from ATP to 4'-phosphopantetheine, yielding dephospho-CoA (dPCoA) and pyrophosphate. The polypeptide is Phosphopantetheine adenylyltransferase (Streptomyces griseus subsp. griseus (strain JCM 4626 / CBS 651.72 / NBRC 13350 / KCC S-0626 / ISP 5235)).